We begin with the raw amino-acid sequence, 145 residues long: Neutral phospholipase A2 paradoxin-like beta chain (145 aa).

A signal peptide spans 1–27 (MHPAHLLVLLAVCVSLLGASDIPPLPL). Intrachain disulfides connect Cys38/Cys98, Cys54/Cys144, Cys56/Cys72, Cys71/Cys125, Cys78/Cys118, Cys87/Cys111, and Cys105/Cys116.

This sequence belongs to the phospholipase A2 family. Group I subfamily. N49 sub-subfamily. In terms of assembly, heterotrimer of alpha, beta, and gamma chains; non-covalently linked. Expressed by the venom gland.

It localises to the secreted. Heterotrimer: Snake venom phospholipase A2 (PLA2) heterotrimer that acts as a potent presynaptic neurotoxin by blocking synaptic transmission and synaptic vesicle recycling. May act by binding in a calcium-dependent fashion to neurotonal pentraxin-1 (NPTX1) and neurotonal pentraxin-2 (NPTX2), but not to neuronal pentraxin receptor (NPTXR). Also binds to taipoxin-associated calcium binding protein 49 (RCN2), a protein localized in the lumen of endoplasmic reticulum. Functionally, monomer (beta chain): Snake venom phospholipase A2 homolog that is neither toxic nor enzymatically active. Does not bind calcium. This is Neutral phospholipase A2 paradoxin-like beta chain from Oxyuranus microlepidotus (Inland taipan).